An 81-amino-acid chain; its full sequence is LYR motif-containing protein 4 (81 aa).

This sequence belongs to the complex I LYR family.

It localises to the mitochondrion. Its subcellular location is the nucleus. The protein operates within cofactor biosynthesis; iron-sulfur cluster biosynthesis. Its function is as follows. Required for nuclear and mitochondrial iron-sulfur protein biosynthesis. The sequence is that of LYR motif-containing protein 4 (lyrm4) from Dictyostelium discoideum (Social amoeba).